Here is a 107-residue protein sequence, read N- to C-terminus: UPF0060 membrane protein Atu1058 (107 aa).

The next 4 membrane-spanning stretches (helical) occupy residues Leu5–Leu25, Trp32–Ala52, Ala59–Glu79, and Arg85–Pro105.

Belongs to the UPF0060 family.

The protein resides in the cell inner membrane. The protein is UPF0060 membrane protein Atu1058 of Agrobacterium fabrum (strain C58 / ATCC 33970) (Agrobacterium tumefaciens (strain C58)).